Consider the following 652-residue polypeptide: Acetolactate synthase 3, chloroplastic (652 aa).

Positions 1–20 (MAAATSSSPISLTAKPSSKS) are enriched in polar residues. The tract at residues 1-23 (MAAATSSSPISLTAKPSSKSPLP) is disordered. The transit peptide at 1–69 (MAAATSSSPI…PEKTDKIKTF (69 aa)) directs the protein to the chloroplast. Glu126 is a thiamine diphosphate binding site. Residues Arg228, 334 to 355 (HGTVYANYAVEHSDLLLAFGVR), and 377 to 396 (DIDSAEIGKNKTPHVSVCGD) contribute to the FAD site. The thiamine pyrophosphate binding stretch occupies residues 469–549 (QHQMWAAQFY…VKILLLNNQH (81 aa)). Asp520 and Asn547 together coordinate Mg(2+).

The protein belongs to the TPP enzyme family. Mg(2+) is required as a cofactor. It depends on thiamine diphosphate as a cofactor.

Its subcellular location is the plastid. It is found in the chloroplast. The catalysed reaction is 2 pyruvate + H(+) = (2S)-2-acetolactate + CO2. It participates in amino-acid biosynthesis; L-isoleucine biosynthesis; L-isoleucine from 2-oxobutanoate: step 1/4. The protein operates within amino-acid biosynthesis; L-valine biosynthesis; L-valine from pyruvate: step 1/4. This chain is Acetolactate synthase 3, chloroplastic, found in Brassica napus (Rape).